The sequence spans 185 residues: Translation initiation factor IF-3 (185 aa).

The protein belongs to the IF-3 family. As to quaternary structure, monomer.

It localises to the cytoplasm. In terms of biological role, IF-3 binds to the 30S ribosomal subunit and shifts the equilibrium between 70S ribosomes and their 50S and 30S subunits in favor of the free subunits, thus enhancing the availability of 30S subunits on which protein synthesis initiation begins. The polypeptide is Translation initiation factor IF-3 (Streptococcus pneumoniae (strain Hungary19A-6)).